Reading from the N-terminus, the 328-residue chain is 4-hydroxythreonine-4-phosphate dehydrogenase (328 aa).

Substrate-binding residues include histidine 134 and threonine 135. Residues histidine 164, histidine 209, and histidine 264 each contribute to the a divalent metal cation site. Substrate contacts are provided by lysine 272, asparagine 281, and arginine 290.

Belongs to the PdxA family. As to quaternary structure, homodimer. Zn(2+) is required as a cofactor. Requires Mg(2+) as cofactor. The cofactor is Co(2+).

It localises to the cytoplasm. It carries out the reaction 4-(phosphooxy)-L-threonine + NAD(+) = 3-amino-2-oxopropyl phosphate + CO2 + NADH. It participates in cofactor biosynthesis; pyridoxine 5'-phosphate biosynthesis; pyridoxine 5'-phosphate from D-erythrose 4-phosphate: step 4/5. Its function is as follows. Catalyzes the NAD(P)-dependent oxidation of 4-(phosphooxy)-L-threonine (HTP) into 2-amino-3-oxo-4-(phosphooxy)butyric acid which spontaneously decarboxylates to form 3-amino-2-oxopropyl phosphate (AHAP). This Shewanella denitrificans (strain OS217 / ATCC BAA-1090 / DSM 15013) protein is 4-hydroxythreonine-4-phosphate dehydrogenase.